Here is a 351-residue protein sequence, read N- to C-terminus: Ferrochelatase (351 aa).

The Fe cation site is built by H221 and E302.

The protein belongs to the ferrochelatase family.

The protein localises to the cytoplasm. It carries out the reaction heme b + 2 H(+) = protoporphyrin IX + Fe(2+). The protein operates within porphyrin-containing compound metabolism; protoheme biosynthesis; protoheme from protoporphyrin-IX: step 1/1. Functionally, catalyzes the ferrous insertion into protoporphyrin IX. The polypeptide is Ferrochelatase (Bradyrhizobium sp. (strain BTAi1 / ATCC BAA-1182)).